Here is a 57-residue protein sequence, read N- to C-terminus: Lantibiotic nisin-Z (57 aa).

A propeptide spanning residues 1 to 23 (MSTKDFNLDLVSVSKKDSGASPR) is cleaved from the precursor. Thr25 is modified (2,3-didehydrobutyrine). A cross-link (lanthionine (Ser-Cys)) is located at residues 26 to 30 (SISLC). At Ser28 the chain carries 2,3-didehydroalanine (Ser). 4 cross-links (beta-methyllanthionine (Thr-Cys)) span residues 31–34 (TPGC), 36–42 (TGALMGC), 46–49 (TATC), and 48–51 (TCNC). Ser56 is subject to 2,3-didehydroalanine (Ser).

The protein belongs to the type A lantibiotic family. Maturation of lantibiotics involves the enzymatic conversion of Thr, and Ser into dehydrated AA and the formation of thioether bonds with cysteine. This is followed by membrane translocation and cleavage of the modified precursor. Post-translationally, the structure of the 2,3-didehydrobutyrine is not discussed in PubMed:15361862. It is probably the Z-isomer by similarity.

Functionally, lanthionine-containing peptide antibiotic (lantibiotic) active on Gram-positive bacteria. The bactericidal activity of lantibiotics is based on depolarization of energized bacterial cytoplasmic membranes, initiated by the formation of aqueous transmembrane pores. This Lactococcus lactis subsp. lactis (Streptococcus lactis) protein is Lantibiotic nisin-Z (nisZ).